The following is a 626-amino-acid chain: tRNA uridine 5-carboxymethylaminomethyl modification enzyme MnmG (626 aa).

FAD is bound at residue 13–18 (GGGHAG). 273–287 (GPRYCPSIEDKIHRF) contributes to the NAD(+) binding site.

The protein belongs to the MnmG family. As to quaternary structure, homodimer. Heterotetramer of two MnmE and two MnmG subunits. FAD serves as cofactor.

It localises to the cytoplasm. NAD-binding protein involved in the addition of a carboxymethylaminomethyl (cmnm) group at the wobble position (U34) of certain tRNAs, forming tRNA-cmnm(5)s(2)U34. In Acinetobacter baumannii (strain SDF), this protein is tRNA uridine 5-carboxymethylaminomethyl modification enzyme MnmG.